A 161-amino-acid polypeptide reads, in one-letter code: Nucleotide-binding protein Sfri_0732 (161 aa).

The protein belongs to the YajQ family.

Nucleotide-binding protein. This Shewanella frigidimarina (strain NCIMB 400) protein is Nucleotide-binding protein Sfri_0732.